Here is a 517-residue protein sequence, read N- to C-terminus: Beta-glucosidase 1 (517 aa).

A signal peptide spans 1-22 (MEDVLTLITMIVLLLLAFHGFG). A beta-D-glucoside-binding positions include Gln48, His145, and 190-191 (NE). Glu191 serves as the catalytic Proton donor. The cysteines at positions 210 and 217 are disulfide-linked. Residues Asn216 and Asn221 are each glycosylated (N-linked (GlcNAc...) asparagine). Residues Tyr333 and Glu406 each contribute to the a beta-D-glucoside site. Glu406 serves as the catalytic Nucleophile. N-linked (GlcNAc...) asparagine glycosylation is present at Asn441. Residues Trp451 and Phe467 each coordinate a beta-D-glucoside. 2 N-linked (GlcNAc...) asparagine glycosylation sites follow: Asn473 and Asn512.

This sequence belongs to the glycosyl hydrolase 1 family.

It catalyses the reaction Hydrolysis of terminal, non-reducing beta-D-glucosyl residues with release of beta-D-glucose.. In Arabidopsis thaliana (Mouse-ear cress), this protein is Beta-glucosidase 1.